The following is a 197-amino-acid chain: MPRAPRTYSKTYSTPKRPYESSRLDAELKLAGEFGLKNKKEIYRISFQLSKIRRAARDLLTRDEKDPKRLFEGNALIRRLVRVGVLSEDKKKLDYVLALKVEDFLERRLQTQVYKLGLAKSVHHARVLITQRHIAVGKQIVNIPSFMVRLDSEKHIDFAPTSPFGGARPGRVARRNAARKAEASGEAADEADEADEE.

The S4 RNA-binding domain maps to 107–181; sequence RRLQTQVYKL…VARRNAARKA (75 aa). Residues 160 to 197 form a disordered region; the sequence is PTSPFGGARPGRVARRNAARKAEASGEAADEADEADEE. K180 participates in a covalent cross-link: Glycyl lysine isopeptide (Lys-Gly) (interchain with G-Cter in ubiquitin). S184 carries the post-translational modification Phosphoserine. Residues 187–197 show a composition bias toward acidic residues; it reads AADEADEADEE.

Belongs to the universal ribosomal protein uS4 family. Component of the small ribosomal subunit (SSU). Mature yeast ribosomes consist of a small (40S) and a large (60S) subunit. The 40S small subunit contains 1 molecule of ribosomal RNA (18S rRNA) and 33 different proteins (encoded by 57 genes). The large 60S subunit contains 3 rRNA molecules (25S, 5.8S and 5S rRNA) and 46 different proteins (encoded by 81 genes). Interacts with snoRNA U3. uS11 interacts with MPP10. Component of the ribosomal small subunit (SSU) processome composed of at least 40 protein subunits and snoRNA U3.

Its subcellular location is the cytoplasm. It localises to the nucleus. It is found in the nucleolus. Functionally, component of the ribosome, a large ribonucleoprotein complex responsible for the synthesis of proteins in the cell. The small ribosomal subunit (SSU) binds messenger RNAs (mRNAs) and translates the encoded message by selecting cognate aminoacyl-transfer RNA (tRNA) molecules. The large subunit (LSU) contains the ribosomal catalytic site termed the peptidyl transferase center (PTC), which catalyzes the formation of peptide bonds, thereby polymerizing the amino acids delivered by tRNAs into a polypeptide chain. The nascent polypeptides leave the ribosome through a tunnel in the LSU and interact with protein factors that function in enzymatic processing, targeting, and the membrane insertion of nascent chains at the exit of the ribosomal tunnel. uS4 is involved in nucleolar processing of pre-18S ribosomal RNA and ribosome assembly. The protein is Small ribosomal subunit protein uS4A of Saccharomyces cerevisiae (strain ATCC 204508 / S288c) (Baker's yeast).